A 635-amino-acid chain; its full sequence is Chaperone protein DnaK (635 aa).

The residue at position 198 (Thr-198) is a Phosphothreonine; by autocatalysis. A disordered region spans residues 597-635 (LYEQDQANNERHDTPETEKAEGDNVVDAEFQEIDDQDKK). Residues 604–618 (NNERHDTPETEKAEG) show a composition bias toward basic and acidic residues. Residues 620 to 635 (NVVDAEFQEIDDQDKK) are compositionally biased toward acidic residues.

Belongs to the heat shock protein 70 family.

Its function is as follows. Acts as a chaperone. The polypeptide is Chaperone protein DnaK (Zymomonas mobilis subsp. mobilis (strain ATCC 31821 / ZM4 / CP4)).